The chain runs to 436 residues: Glutamyl-tRNA reductase (436 aa).

Residues 49-52 (TCNR), serine 109, 114-116 (EGQ), and glutamine 120 each bind substrate. Residue cysteine 50 is the Nucleophile of the active site. 198-203 (GAGRMS) is an NADP(+) binding site.

Belongs to the glutamyl-tRNA reductase family. In terms of assembly, homodimer.

The enzyme catalyses (S)-4-amino-5-oxopentanoate + tRNA(Glu) + NADP(+) = L-glutamyl-tRNA(Glu) + NADPH + H(+). Its pathway is porphyrin-containing compound metabolism; protoporphyrin-IX biosynthesis; 5-aminolevulinate from L-glutamyl-tRNA(Glu): step 1/2. It participates in porphyrin-containing compound metabolism; chlorophyll biosynthesis. Catalyzes the NADPH-dependent reduction of glutamyl-tRNA(Glu) to glutamate 1-semialdehyde (GSA). The sequence is that of Glutamyl-tRNA reductase from Prochlorococcus marinus (strain MIT 9312).